Consider the following 277-residue polypeptide: Ras suppressor protein 1 (277 aa).

Positions Met1 to Ser23 are disordered. At Ser2 the chain carries N-acetylserine. Basic and acidic residues predominate over residues Lys7–Ser23. 7 LRR repeats span residues His41–Lys63, Asn64–Leu85, Lys87–Ser108, Leu110–Leu133, Thr135–Leu156, Lys158–Leu179, and Gln181–Leu202. Residues Met250 to Lys277 are disordered. A compositionally biased stretch (basic and acidic residues) spans Pro256 to Lys265.

Its function is as follows. Potentially plays a role in the Ras signal transduction pathway. Capable of suppressing v-Ras transformation in vitro. The polypeptide is Ras suppressor protein 1 (Rsu1) (Mus musculus (Mouse)).